A 203-amino-acid polypeptide reads, in one-letter code: Peptide deformylase (203 aa).

Residues Cys130 and His173 each coordinate Fe cation. The active site involves Glu174. Residue His177 participates in Fe cation binding.

This sequence belongs to the polypeptide deformylase family. Requires Fe(2+) as cofactor.

It carries out the reaction N-terminal N-formyl-L-methionyl-[peptide] + H2O = N-terminal L-methionyl-[peptide] + formate. Functionally, removes the formyl group from the N-terminal Met of newly synthesized proteins. Requires at least a dipeptide for an efficient rate of reaction. N-terminal L-methionine is a prerequisite for activity but the enzyme has broad specificity at other positions. The chain is Peptide deformylase from Streptococcus pneumoniae serotype 19F (strain G54).